The following is a 299-amino-acid chain: NAD-dependent protein deacetylase 1 (299 aa).

The Deacetylase sirtuin-type domain occupies 15–292 (LPPGTTDLAP…TTVADRLGLR (278 aa)). NAD(+) is bound by residues 39-59 (GAGI…GSLS) and 117-120 (QNVD). Histidine 135 functions as the Proton acceptor in the catalytic mechanism. Cysteine 143, cysteine 146, cysteine 194, and cysteine 197 together coordinate Zn(2+). NAD(+)-binding positions include 234 to 236 (GSS) and leucine 278.

This sequence belongs to the sirtuin family. Class II subfamily. The cofactor is Zn(2+).

It is found in the cytoplasm. It carries out the reaction N(6)-acetyl-L-lysyl-[protein] + NAD(+) + H2O = 2''-O-acetyl-ADP-D-ribose + nicotinamide + L-lysyl-[protein]. Its function is as follows. NAD-dependent protein deacetylase which modulates the activities of several enzymes which are inactive in their acetylated form. In Streptomyces coelicolor (strain ATCC BAA-471 / A3(2) / M145), this protein is NAD-dependent protein deacetylase 1.